The chain runs to 440 residues: Xaa-Pro dipeptidase (440 aa).

Residues aspartate 241, aspartate 252, histidine 333, glutamate 378, and glutamate 417 each coordinate Mn(2+).

It belongs to the peptidase M24B family. Bacterial-type prolidase subfamily. Mn(2+) serves as cofactor.

It carries out the reaction Xaa-L-Pro dipeptide + H2O = an L-alpha-amino acid + L-proline. Splits dipeptides with a prolyl residue in the C-terminal position. This is Xaa-Pro dipeptidase from Glaesserella parasuis serovar 5 (strain SH0165) (Haemophilus parasuis).